The chain runs to 122 residues: Large ribosomal subunit protein uL14c (122 aa).

It belongs to the universal ribosomal protein uL14 family. Part of the 50S ribosomal subunit.

The protein localises to the plastid. Its subcellular location is the chloroplast. Binds to 23S rRNA. The protein is Large ribosomal subunit protein uL14c of Nicotiana tomentosiformis (Tobacco).